The chain runs to 729 residues: Fatty acid oxidation complex subunit alpha (729 aa).

An enoyl-CoA hydratase/isomerase region spans residues 1 to 189; it reads MLYQSETLQL…KIGLVDAVVD (189 aa). Residue D296 coordinates substrate. Residues 311 to 729 are 3-hydroxyacyl-CoA dehydrogenase; the sequence is AAPKLAAVLG…LLDVSTNQPA (419 aa). Residues M324, D343, 400–402, K407, and S429 contribute to the NAD(+) site; that span reads VVE. H450 serves as the catalytic For 3-hydroxyacyl-CoA dehydrogenase activity. Residue N453 coordinates NAD(+). Positions 500 and 660 each coordinate substrate.

This sequence in the N-terminal section; belongs to the enoyl-CoA hydratase/isomerase family. The protein in the C-terminal section; belongs to the 3-hydroxyacyl-CoA dehydrogenase family. In terms of assembly, heterotetramer of two alpha chains (FadB) and two beta chains (FadA).

It catalyses the reaction a (3S)-3-hydroxyacyl-CoA + NAD(+) = a 3-oxoacyl-CoA + NADH + H(+). The catalysed reaction is a (3S)-3-hydroxyacyl-CoA = a (2E)-enoyl-CoA + H2O. The enzyme catalyses a 4-saturated-(3S)-3-hydroxyacyl-CoA = a (3E)-enoyl-CoA + H2O. It carries out the reaction (3S)-3-hydroxybutanoyl-CoA = (3R)-3-hydroxybutanoyl-CoA. It catalyses the reaction a (3Z)-enoyl-CoA = a 4-saturated (2E)-enoyl-CoA. The catalysed reaction is a (3E)-enoyl-CoA = a 4-saturated (2E)-enoyl-CoA. The protein operates within lipid metabolism; fatty acid beta-oxidation. Its function is as follows. Involved in the aerobic and anaerobic degradation of long-chain fatty acids via beta-oxidation cycle. Catalyzes the formation of 3-oxoacyl-CoA from enoyl-CoA via L-3-hydroxyacyl-CoA. It can also use D-3-hydroxyacyl-CoA and cis-3-enoyl-CoA as substrate. This chain is Fatty acid oxidation complex subunit alpha, found in Yersinia pestis bv. Antiqua (strain Antiqua).